The following is a 524-amino-acid chain: Tyrosine-protein kinase HCK (524 aa).

Residues 1–72 form a disordered region; it reads MGGRSSCEDP…NNSNSMPPGF (72 aa). The N-myristoyl glycine moiety is linked to residue Gly-2. Gly-3 carries S-palmitoyl cysteine lipidation. Positions 29–38 are enriched in basic and acidic residues; sequence FLRDGSKASK. Tyr-50 is modified (phosphotyrosine; by autocatalysis). The span at 54–68 shows a compositional bias: polar residues; it reads PTSSSKLGPNNSNSM. One can recognise an SH3 domain in the interval 76 to 136; sequence SEDTIVVALY…PSNYVARVNS (61 aa). An SH2 domain is found at 142 to 239; it reads WFFKGISRKD…GLCQKLSVPC (98 aa). Thr-200 bears the Phosphothreonine mark. At Tyr-207 the chain carries Phosphotyrosine. Residues 260–513 form the Protein kinase domain; sequence LQMEKKLGAG…YIQSVLDDFY (254 aa). Residues 266–274 and Lys-288 each bind ATP; that span reads LGAGQFGEV. Residue Asp-379 is the Proton acceptor of the active site. Tyr-409 bears the Phosphotyrosine; by autocatalysis mark. A Phosphoserine modification is found at Ser-460. Tyr-520 is modified (phosphotyrosine).

This sequence belongs to the protein kinase superfamily. Tyr protein kinase family. SRC subfamily. Interacts with ADAM15. Interacts with FASLG. Interacts with ARRB1 and ARRB2. Interacts with FCGR1A; the interaction may be indirect. Interacts with IL6ST. Interacts (via SH3 domain) with ELMO1. Interacts (via SH3 domain) with TP73. Interacts with YAP1. Interacts with ABL1 and ITGB1, and thereby recruits ABL1 to activated ITGB1. Interacts (via SH2 domain) with FLT3 (tyrosine phosphorylated). Interacts with CBL. Interacts with VAV1, WAS and RAPGEF1. Interacts (via SH3 domain) with WDCP. Post-translationally, phosphorylated on several tyrosine residues. Autophosphorylated. Becomes rapidly phosphorylated upon activation of the immunoglobulin receptors FCGR1A and FCGR2A. Phosphorylation at Tyr-409 increases kinase activity. Phosphorylation at Tyr-520 inhibits kinase activity. Kinase activity is not required for phosphorylation at Tyr-520, suggesting that this site may be a target of other kinases. Ubiquitinated by CBL, leading to its degradation via the proteasome. In terms of processing, isoform 2 palmitoylation at position 2 requires prior myristoylation. Palmitoylation at position 3 is required for caveolar localization of isoform 2. Expressed predominantly in cells of the myeloid and B-lymphoid lineages.

Its subcellular location is the cytoplasmic vesicle. It localises to the secretory vesicle. The protein localises to the cytoplasm. The protein resides in the cytosol. It is found in the membrane. Its subcellular location is the caveola. It localises to the lysosome. The protein localises to the cell projection. The protein resides in the podosome membrane. It is found in the cell membrane. Its subcellular location is the cell junction. It localises to the focal adhesion. The protein localises to the cytoskeleton. The protein resides in the golgi apparatus. It is found in the nucleus. It carries out the reaction L-tyrosyl-[protein] + ATP = O-phospho-L-tyrosyl-[protein] + ADP + H(+). Subject to autoinhibition, mediated by intramolecular interactions involving the SH2 and SH3 domains. Kinase activity is also regulated by phosphorylation at regulatory tyrosine residues. Phosphorylation at Tyr-409 is required for optimal activity. Phosphorylation at Tyr-520 inhibits kinase activity. Inhibited by PP1. Functionally, non-receptor tyrosine-protein kinase found in hematopoietic cells that transmits signals from cell surface receptors and plays an important role in the regulation of innate immune responses, including neutrophil, monocyte, macrophage and mast cell functions, phagocytosis, cell survival and proliferation, cell adhesion and migration. Acts downstream of receptors that bind the Fc region of immunoglobulins, such as FCGR1A and FCGR2A, but also CSF3R, PLAUR, the receptors for IFNG, IL2, IL6 and IL8, and integrins, such as ITGB1 and ITGB2. During the phagocytic process, mediates mobilization of secretory lysosomes, degranulation, and activation of NADPH oxidase to bring about the respiratory burst. Plays a role in the release of inflammatory molecules. Promotes reorganization of the actin cytoskeleton and actin polymerization, formation of podosomes and cell protrusions. Inhibits TP73-mediated transcription activation and TP73-mediated apoptosis. Phosphorylates CBL in response to activation of immunoglobulin gamma Fc region receptors. Phosphorylates ADAM15, BCR, ELMO1, FCGR2A, GAB1, GAB2, RAPGEF1, STAT5B, TP73, VAV1 and WAS. The chain is Tyrosine-protein kinase HCK (Hck) from Mus musculus (Mouse).